The chain runs to 874 residues: Alanine--tRNA ligase (874 aa).

Zn(2+)-binding residues include histidine 564, histidine 568, cysteine 665, and histidine 669.

It belongs to the class-II aminoacyl-tRNA synthetase family. Zn(2+) is required as a cofactor.

It is found in the cytoplasm. It carries out the reaction tRNA(Ala) + L-alanine + ATP = L-alanyl-tRNA(Ala) + AMP + diphosphate. In terms of biological role, catalyzes the attachment of alanine to tRNA(Ala) in a two-step reaction: alanine is first activated by ATP to form Ala-AMP and then transferred to the acceptor end of tRNA(Ala). Also edits incorrectly charged Ser-tRNA(Ala) and Gly-tRNA(Ala) via its editing domain. This chain is Alanine--tRNA ligase, found in Paraburkholderia phymatum (strain DSM 17167 / CIP 108236 / LMG 21445 / STM815) (Burkholderia phymatum).